Here is a 569-residue protein sequence, read N- to C-terminus: MRIFSLALGFLPLVAGHTLMTTLYVDGENQGDGVCIRMNRNAEKATFPISPLANDAMACGYDGEIAAARTCAVSQSSTLTFEFRAYPDGSQPGSIDGSHKGPCAVYMKPVANATSDNNAAGDGWFKIYELDYDSSTSQWCTEKLIANNGFLSVQIPEGLRGGDYLVRTELLALHAAQDSPPDPQFYVGCAQVFLEGSESGDVPEGVVIDASTYSLDVPGLTYNIYTEPLELPYPSFGPSVYQPNASASTENAKVSGTQATQKDGLQPEGCILVRDDWCGYEVSSYSDEAGCWAECWTQADECWGTYLPTGNKNCQIWQDKCTEIDTQCSAGNWNGPPNKGKVLTPELEGVGGSMKVFSGGVSSADSEGSGSGIDEAETEMNTSQGAAFTSTPAAETAVAADATATATATTEDAEATTAAEAAATSGAGRPGRGHGHGRGPEVYADITVYDDNDHLSNIRPVISCCKVNLGPNDSFLRAARFAPIFSGSHGLRIDYSDTHYWLIAWPVNVVSFDQCLPQPQGSAPETSRTAIHLFAFSRAALSPYTCYLHLHIIEFTISAAFDQNDAEES.

Residues 1–16 form the signal peptide; the sequence is MRIFSLALGFLPLVAG. Cu(2+)-binding residues include His17 and His99. An intrachain disulfide couples Cys59 to Cys189. Residue Asn112 is glycosylated (N-linked (GlcNAc...) asparagine). Residues His174 and Gln184 each coordinate O2. Cu(2+) is bound at residue Tyr186. N-linked (GlcNAc...) asparagine glycosylation is found at Asn244 and Asn381. A compositionally biased stretch (low complexity) spans 399-424; that stretch reads AADATATATATTEDAEATTAAEAAAT. The segment at 399–439 is disordered; it reads AADATATATATTEDAEATTAAEAAATSGAGRPGRGHGHGRG. N-linked (GlcNAc...) asparagine glycosylation occurs at Asn472.

This sequence belongs to the polysaccharide monooxygenase AA9 family. The cofactor is Cu(2+).

The protein resides in the secreted. The enzyme catalyses [(1-&gt;4)-beta-D-glucosyl]n+m + reduced acceptor + O2 = 4-dehydro-beta-D-glucosyl-[(1-&gt;4)-beta-D-glucosyl]n-1 + [(1-&gt;4)-beta-D-glucosyl]m + acceptor + H2O.. In terms of biological role, lytic polysaccharide monooxygenase (LPMO) that depolymerizes crystalline and amorphous polysaccharides via the oxidation of scissile alpha- or beta-(1-4)-glycosidic bonds, yielding C4 oxidation products. Catalysis by LPMOs requires the reduction of the active-site copper from Cu(II) to Cu(I) by a reducing agent and H(2)O(2) or O(2) as a cosubstrate. This chain is AA9 family lytic polysaccharide monooxygenase A, found in Emericella nidulans (strain FGSC A4 / ATCC 38163 / CBS 112.46 / NRRL 194 / M139) (Aspergillus nidulans).